A 408-amino-acid polypeptide reads, in one-letter code: Argininosuccinate synthase (408 aa).

Residue 8–16 participates in ATP binding; that stretch reads AYSGGLDTS. An L-citrulline-binding site is contributed by Tyr-86. Residue Gly-116 participates in ATP binding. L-aspartate is bound by residues Thr-118, Asn-122, and Asp-123. Asn-122 contributes to the L-citrulline binding site. L-citrulline contacts are provided by Arg-126, Ser-174, Glu-259, and Tyr-271.

Belongs to the argininosuccinate synthase family. Type 1 subfamily. In terms of assembly, homotetramer.

It localises to the cytoplasm. The catalysed reaction is L-citrulline + L-aspartate + ATP = 2-(N(omega)-L-arginino)succinate + AMP + diphosphate + H(+). Its pathway is amino-acid biosynthesis; L-arginine biosynthesis; L-arginine from L-ornithine and carbamoyl phosphate: step 2/3. The polypeptide is Argininosuccinate synthase (Leuconostoc mesenteroides subsp. mesenteroides (strain ATCC 8293 / DSM 20343 / BCRC 11652 / CCM 1803 / JCM 6124 / NCDO 523 / NBRC 100496 / NCIMB 8023 / NCTC 12954 / NRRL B-1118 / 37Y)).